We begin with the raw amino-acid sequence, 73 residues long: Signaling peptide TAXIMIN 2 (73 aa).

The first 27 residues, 1–27 (MGDCRPLGFLIGLPFALVALVLALVGA), serve as a signal peptide directing secretion.

As to expression, confined to the vasculature of various organs, including seedling roots, leaves, cotyledons, sepals and petals. Also accumulates in root hair cells.

The protein localises to the secreted. In terms of biological role, signaling peptide involved in the regulation of lateral organs separation. This Arabidopsis thaliana (Mouse-ear cress) protein is Signaling peptide TAXIMIN 2.